The chain runs to 335 residues: UPF0065 protein BB4329 (335 aa).

A signal peptide spans 1-39 (MNKNIPAFHRRCHGLVQGLARTLLLAPVLLALSVPAAQA).

This sequence belongs to the UPF0065 (bug) family.

The protein localises to the periplasm. The protein is UPF0065 protein BB4329 of Bordetella bronchiseptica (strain ATCC BAA-588 / NCTC 13252 / RB50) (Alcaligenes bronchisepticus).